We begin with the raw amino-acid sequence, 395 residues long: Elongation factor Tu (395 aa).

The tr-type G domain maps to 10 to 204; it reads KPHVNIGTIG…TVDSYIPEPK (195 aa). Residues 19-26 form a G1 region; that stretch reads GHVDHGKT. 19-26 lines the GTP pocket; sequence GHVDHGKT. Thr-26 contributes to the Mg(2+) binding site. The interval 60–64 is G2; that stretch reads GITIN. A G3 region spans residues 81–84; sequence DAPG. Residues 81-85 and 136-139 contribute to the GTP site; these read DAPGH and NKTD. The interval 136 to 139 is G4; the sequence is NKTD. Residues 174–176 are G5; the sequence is SAL.

It belongs to the TRAFAC class translation factor GTPase superfamily. Classic translation factor GTPase family. EF-Tu/EF-1A subfamily. Monomer.

It localises to the cytoplasm. The catalysed reaction is GTP + H2O = GDP + phosphate + H(+). GTP hydrolase that promotes the GTP-dependent binding of aminoacyl-tRNA to the A-site of ribosomes during protein biosynthesis. The sequence is that of Elongation factor Tu from Leuconostoc citreum (strain KM20).